We begin with the raw amino-acid sequence, 373 residues long: D-alanine--D-alanine ligase (373 aa).

Residues 156–363 (KKLLAADGLP…YPTLLATMIE (208 aa)) form the ATP-grasp domain. 184-239 (CERLGLPVFVKPARGGSSIGVSRVSSWDQLPAAVARARRHDPKVIVEAAISGRELE) provides a ligand contact to ATP. Mg(2+) is bound by residues D318, E330, and N332.

Belongs to the D-alanine--D-alanine ligase family. Requires Mg(2+) as cofactor. It depends on Mn(2+) as a cofactor.

The protein localises to the cytoplasm. The catalysed reaction is 2 D-alanine + ATP = D-alanyl-D-alanine + ADP + phosphate + H(+). It functions in the pathway cell wall biogenesis; peptidoglycan biosynthesis. In terms of biological role, cell wall formation. This chain is D-alanine--D-alanine ligase, found in Mycobacterium bovis (strain BCG / Pasteur 1173P2).